Consider the following 1320-residue polypeptide: Poly [ADP-ribose] polymerase tankyrase-1 (1320 aa).

Residues 1–15 show a composition bias toward basic residues; sequence MAASRRSQHHHHHHQ. Disordered regions lie at residues 1–88 and 111–152; these read MAAS…DGAV and AGGG…AAGV. Over residues 25–46 the composition is skewed to pro residues; it reads SAPPPPPPPPLSPGLAPGPTPA. Residues 69–82 are compositionally biased toward basic and acidic residues; it reads DGSRDPPDRPRSPD. Low complexity predominate over residues 120-152; sequence NSASSASSPTSSSSSSPSSPGSSLAESPEAAGV. 18 ANK repeats span residues 174–202, 208–237, 241–270, 274–303, 361–390, 394–423, 427–456, 514–546, 550–579, 583–612, 676–705, 709–738, 742–771, 775–803, 829–858, 862–891, 895–924, and 928–957; these read GALR…NVNA, RKSS…NVHA, GGLI…DPNA, WNYT…DPNI, RKST…DVHA, GGLV…CVNA, WQFT…DPTL, SHET…NVNE, DFMT…KMNA, LGQT…DPSI, RHST…DVHA, GGLV…SVNV, WKFT…DPTK, DGNT…LLDA, RNST…DVNA, GGLI…CVNA, WAFT…DPTM, and EGQT…LPTC. The region spanning 1019–1082 is the SAM domain; the sequence is GLDMNISQFL…IKGVERLLGG (64 aa). One can recognise a PARP catalytic domain in the interval 1105 to 1310; sequence APEDKEYQSV…YQIMKPEAPS (206 aa). 4 residues coordinate Zn(2+): C1227, H1230, C1235, and C1238.

The protein belongs to the ARTD/PARP family. In terms of assembly, oligomerizes and associates with TNKS2. Interacts with the cytoplasmic domain of LNPEP/Otase in SLC2A4/GLUT4-vesicles. Binds to the N-terminus of telomeric TERF1 via the ANK repeats. Found in a complex with POT1; TERF1 and TINF2. Interacts with AXIN1. Interacts with AXIN2. Interacts with BLZF1 and CASC3. Interacts with NUMA1. Post-translationally, phosphorylated on serine residues by MAPK kinases upon insulin stimulation. Phosphorylated during mitosis. Ubiquitinated by RNF146 when auto-poly-ADP-ribosylated, leading to its degradation. In terms of processing, ADP-ribosylated (-auto). Poly-ADP-ribosylated protein is recognized by RNF146, followed by ubiquitination.

Its subcellular location is the cytoplasm. The protein resides in the golgi apparatus membrane. The protein localises to the cytoskeleton. It is found in the microtubule organizing center. It localises to the centrosome. Its subcellular location is the nucleus. The protein resides in the nuclear pore complex. The protein localises to the chromosome. It is found in the telomere. It localises to the spindle pole. It catalyses the reaction NAD(+) + (ADP-D-ribosyl)n-acceptor = nicotinamide + (ADP-D-ribosyl)n+1-acceptor + H(+).. It carries out the reaction L-aspartyl-[protein] + NAD(+) = 4-O-(ADP-D-ribosyl)-L-aspartyl-[protein] + nicotinamide. The enzyme catalyses L-glutamyl-[protein] + NAD(+) = 5-O-(ADP-D-ribosyl)-L-glutamyl-[protein] + nicotinamide. Its function is as follows. Poly-ADP-ribosyltransferase involved in various processes such as Wnt signaling pathway, telomere length and vesicle trafficking. Acts as an activator of the Wnt signaling pathway by mediating poly-ADP-ribosylation (PARsylation) of AXIN1 and AXIN2, 2 key components of the beta-catenin destruction complex: poly-ADP-ribosylated target proteins are recognized by RNF146, which mediates their ubiquitination and subsequent degradation. Also mediates PARsylation of BLZF1 and CASC3, followed by recruitment of RNF146 and subsequent ubiquitination. Mediates PARsylation of TERF1, thereby contributing to the regulation of telomere length. Involved in centrosome maturation during prometaphase by mediating PARsylation of HEPACAM2/MIKI. May also regulate vesicle trafficking and modulate the subcellular distribution of SLC2A4/GLUT4-vesicles. May be involved in spindle pole assembly through PARsylation of NUMA1. Stimulates 26S proteasome activity. The protein is Poly [ADP-ribose] polymerase tankyrase-1 (Tnks) of Mus musculus (Mouse).